A 253-amino-acid chain; its full sequence is tRNA uridine(34) hydroxylase (253 aa).

The Rhodanese domain occupies 127–221 (RGRPLVLLDT…YFEEVGGEGY (95 aa)). The active-site Cysteine persulfide intermediate is cysteine 181.

This sequence belongs to the TrhO family.

It catalyses the reaction uridine(34) in tRNA + AH2 + O2 = 5-hydroxyuridine(34) in tRNA + A + H2O. Functionally, catalyzes oxygen-dependent 5-hydroxyuridine (ho5U) modification at position 34 in tRNAs. The polypeptide is tRNA uridine(34) hydroxylase (Xanthomonas oryzae pv. oryzae (strain MAFF 311018)).